The following is a 321-amino-acid chain: Tetraacyldisaccharide 4'-kinase (321 aa).

54–61 contributes to the ATP binding site; it reads SVGGTGKT.

Belongs to the LpxK family.

It catalyses the reaction a lipid A disaccharide + ATP = a lipid IVA + ADP + H(+). It functions in the pathway glycolipid biosynthesis; lipid IV(A) biosynthesis; lipid IV(A) from (3R)-3-hydroxytetradecanoyl-[acyl-carrier-protein] and UDP-N-acetyl-alpha-D-glucosamine: step 6/6. Functionally, transfers the gamma-phosphate of ATP to the 4'-position of a tetraacyldisaccharide 1-phosphate intermediate (termed DS-1-P) to form tetraacyldisaccharide 1,4'-bis-phosphate (lipid IVA). This Rickettsia bellii (strain OSU 85-389) protein is Tetraacyldisaccharide 4'-kinase.